A 410-amino-acid polypeptide reads, in one-letter code: Eukaryotic initiation factor 4A (410 aa).

Positions 37 to 65 (ESFDSMGLQENLLRGIYAYGFEKPSAIQQ) match the Q motif motif. One can recognise a Helicase ATP-binding domain in the interval 68–238 (IVPFCKGLDV…RKFMNKPVRI (171 aa)). Residue 81 to 88 (AQSGTGKT) participates in ATP binding. Positions 186–189 (DEAD) match the DEAD box motif. The Helicase C-terminal domain maps to 249 to 410 (GIKQFYVNID…ELPANVADLL (162 aa)).

The protein belongs to the DEAD box helicase family. eIF4A subfamily. In terms of assembly, eIF4F is a multi-subunit complex, the composition of which varies with external and internal environmental conditions. It is composed of at least EIF4A, EIF4E and EIF4G.

It catalyses the reaction ATP + H2O = ADP + phosphate + H(+). In terms of biological role, ATP-dependent RNA helicase which is a subunit of the eIF4F complex involved in cap recognition and is required for mRNA binding to ribosome. In the current model of translation initiation, eIF4A unwinds RNA secondary structures in the 5'-UTR of mRNAs which is necessary to allow efficient binding of the small ribosomal subunit, and subsequent scanning for the initiator codon. The sequence is that of Eukaryotic initiation factor 4A from Zea mays (Maize).